The chain runs to 275 residues: Urease accessory protein UreD (275 aa).

The protein belongs to the UreD family. In terms of assembly, ureD, UreF and UreG form a complex that acts as a GTP-hydrolysis-dependent molecular chaperone, activating the urease apoprotein by helping to assemble the nickel containing metallocenter of UreC. The UreE protein probably delivers the nickel.

Its subcellular location is the cytoplasm. In terms of biological role, required for maturation of urease via the functional incorporation of the urease nickel metallocenter. This Cereibacter sphaeroides (strain ATCC 17025 / ATH 2.4.3) (Rhodobacter sphaeroides) protein is Urease accessory protein UreD.